Here is a 965-residue protein sequence, read N- to C-terminus: Receptor-like protein 15 (965 aa).

The first 23 residues, 1-23 (MEGKVFLGHNLIWVMLLMGQLHG), serve as a signal peptide directing secretion. Topologically, residues 24 to 916 (YKSCIDEEKI…GVEADESIID (893 aa)) are extracellular. Asn57, Asn95, Asn109, and Asn145 each carry an N-linked (GlcNAc...) asparagine glycan. LRR repeat units lie at residues 80 to 102 (EISFGGLSLKDNSLLNLSLLHPF), 103 to 127 (EDVRSLNLSSSRCSGLFDDVEGYKS), 131 to 154 (LRKLEILDLASNKFNNSIFHFLSA), 156 to 179 (TSLTTLFLRSNNMDGSFPAKELRD), 180 to 204 (LTNLELLDLSRNRFNGSIPIQELSS), 206 to 230 (RKLKALDLSGNEFSGSMELQGKFCT), 243 to 267 (LNNMQELDLSQNKLVGHLPSCLTSL), 268 to 290 (TGLRVLDLSSNKLTGTVPSSLGS), 292 to 315 (QSLEYLSLFDNDFEGSFSFGSLAN), 316 to 341 (LSNLMVLKLCSKSSSLQVLSESSWKP), 342 to 365 (KFQLSVIALRSCNMEKVPHFLLHQ), 366 to 389 (KDLRHVDLSDNNISGKLPSWLLAN), 391 to 415 (TKLKVLLLQNNLFTSFQIPKSAHNL), 417 to 435 (FLDVSANDFNHLFPENIGW), 437 to 461 (FPHLRYLNTSKNNFQENLPSSLGNM), 462 to 485 (NGIQYMDLSRNSFHGNLPRSFVNG), and 487 to 512 (YSMAILKLSHNKLSGEIFPESTNFTN). Residue Asn194 is glycosylated (N-linked (GlcNAc...) asparagine). Asn315 carries an N-linked (GlcNAc...) asparagine glycan. Asn377 and Asn389 each carry an N-linked (GlcNAc...) asparagine glycan. N-linked (GlcNAc...) asparagine glycosylation is present at Asn444. N-linked (GlcNAc...) asparagine glycosylation occurs at Asn509. Residues 514–533 (LGLFMDNNLFTGKIGQGLRS) form an LRR 18; degenerate repeat. 11 LRR repeats span residues 534–557 (LINLELLDMSNNNLTGVIPSWIGE), 558–582 (LPSLTALLISDNFLKGDIPMSLFNK), 584–606 (SLQLLDLSANSLSGVIPPQHDSR), 608–627 (GVVLLLQDNKLSGTIPDTLL), 628–652 (ANVEILDLRNNRFSGKIPEFINIQN), 654–674 (SILLLRGNNFTGQIPHQLCGL), 675–698 (SNIQLLDLSNNRLNGTIPSCLSNT), 778–801 (LKLLFGMDLSENELSGEIPVEFGG), 802–825 (LLELRALNLSHNNLSGVIPKSISS), 827–850 (EKMESFDLSFNRLQGRIPSQLTEL), and 851–875 (TSLSVFKVSHNNLSGVIPQGRQFNT). N-linked (GlcNAc...) asparagine glycosylation is found at Asn546 and Asn581. N-linked (GlcNAc...) asparagine glycosylation is found at Asn652, Asn662, Asn688, and Asn697. 2 N-linked (GlcNAc...) asparagine glycosylation sites follow: Asn809 and Asn814. N-linked (GlcNAc...) asparagine glycans are attached at residues Asn862, Asn893, and Asn898. Residues 917–937 (MVSFYLSFAAAYVTILIGILA) traverse the membrane as a helical segment. The Cytoplasmic segment spans residues 938-965 (SLSFDSPWSRFWFYKVDAFIKKVRNLLL).

The protein belongs to the RLP family.

It localises to the cell membrane. The protein is Receptor-like protein 15 of Arabidopsis thaliana (Mouse-ear cress).